A 149-amino-acid polypeptide reads, in one-letter code: Calmodulin-like protein 3 (149 aa).

EF-hand domains are found at residues 8 to 43 (EQIAEFKEAFSLFDKDGDGSITTQELGTVMRSLGQN), 44 to 79 (PTEAELQGMVNEIDKDGNGTVDFPEFLTMMSRKMKD), 81 to 116 (DSEEEIREAFRVFDKDGNGFVSAAELRHVMTKLGEK), and 117 to 149 (LSDEEVDEMIQAADTDGDGQVNYEEFVHMLVSK). Residues D21, D23, D25, S27, E32, D57, D59, N61, T63, E68, D94, D96, N98, E105, D130, D132, D134, Q136, and E141 each coordinate Ca(2+).

Belongs to the calmodulin family. As to quaternary structure, interacts with MYO10, the interaction is calcium-dependent and essential for MYO10 function in filopodial extension.

May function as a specific light chain of unconventional myosin-10 (MYO10), also enhances MYO10 translation, possibly by acting as a chaperone for the emerging MYO10 heavy chain protein. May compete with calmodulin by binding, with different affinities, to cellular substrates. The protein is Calmodulin-like protein 3 (Calml3) of Mus musculus (Mouse).